The following is a 73-amino-acid chain: Putative neurotoxin NaH-Cpp1a (73 aa).

A signal peptide spans 1–23; that stretch reads MKSFYGILCVAVLMMFHLEMSES. 3 disulfide bridges follow: Cys43-Cys58, Cys50-Cys63, and Cys57-Cys70.

As to expression, expressed outside of acontia.

Its subcellular location is the secreted. It is found in the nematocyst. Functionally, putative neurotoxin. The sequence is that of Putative neurotoxin NaH-Cpp1a from Calliactis polypus (Hermit crab anemone).